The chain runs to 43 residues: Cytochrome b559 subunit beta (43 aa).

Residues 18-34 traverse the membrane as a helical segment; it reads WLAVHGLAIPTVFFLGG. H22 is a binding site for heme.

The protein belongs to the PsbE/PsbF family. Heterodimer of an alpha subunit and a beta subunit. PSII is composed of 1 copy each of membrane proteins PsbA, PsbB, PsbC, PsbD, PsbE, PsbF, PsbH, PsbI, PsbJ, PsbK, PsbL, PsbM, PsbT, PsbX, PsbY, PsbZ, Psb30/Ycf12, at least 3 peripheral proteins of the oxygen-evolving complex and a large number of cofactors. It forms dimeric complexes. It depends on heme b as a cofactor.

It is found in the plastid. The protein localises to the chloroplast thylakoid membrane. This b-type cytochrome is tightly associated with the reaction center of photosystem II (PSII). PSII is a light-driven water:plastoquinone oxidoreductase that uses light energy to abstract electrons from H(2)O, generating O(2) and a proton gradient subsequently used for ATP formation. It consists of a core antenna complex that captures photons, and an electron transfer chain that converts photonic excitation into a charge separation. This chain is Cytochrome b559 subunit beta, found in Thalassiosira pseudonana (Marine diatom).